Reading from the N-terminus, the 154-residue chain is 6,7-dimethyl-8-ribityllumazine synthase (154 aa).

5-amino-6-(D-ribitylamino)uracil is bound by residues Phe26, 60–62, and 84–86; these read ALE and CII. 89–90 contacts (2S)-2-hydroxy-3-oxobutyl phosphate; sequence ET. His92 serves as the catalytic Proton donor. Residue Asn117 coordinates 5-amino-6-(D-ribitylamino)uracil. Residue Arg131 coordinates (2S)-2-hydroxy-3-oxobutyl phosphate.

This sequence belongs to the DMRL synthase family.

It catalyses the reaction (2S)-2-hydroxy-3-oxobutyl phosphate + 5-amino-6-(D-ribitylamino)uracil = 6,7-dimethyl-8-(1-D-ribityl)lumazine + phosphate + 2 H2O + H(+). It participates in cofactor biosynthesis; riboflavin biosynthesis; riboflavin from 2-hydroxy-3-oxobutyl phosphate and 5-amino-6-(D-ribitylamino)uracil: step 1/2. Its function is as follows. Catalyzes the formation of 6,7-dimethyl-8-ribityllumazine by condensation of 5-amino-6-(D-ribitylamino)uracil with 3,4-dihydroxy-2-butanone 4-phosphate. This is the penultimate step in the biosynthesis of riboflavin. This chain is 6,7-dimethyl-8-ribityllumazine synthase, found in Acidovorax ebreus (strain TPSY) (Diaphorobacter sp. (strain TPSY)).